The primary structure comprises 383 residues: Succinyl-diaminopimelate desuccinylase (383 aa).

His-73 provides a ligand contact to Zn(2+). Residue Asp-75 is part of the active site. Asp-107 provides a ligand contact to Zn(2+). The active-site Proton acceptor is Glu-141. Zn(2+)-binding residues include Glu-142, Glu-170, and His-356.

The protein belongs to the peptidase M20A family. DapE subfamily. As to quaternary structure, homodimer. Zn(2+) serves as cofactor. The cofactor is Co(2+).

It carries out the reaction N-succinyl-(2S,6S)-2,6-diaminopimelate + H2O = (2S,6S)-2,6-diaminopimelate + succinate. The protein operates within amino-acid biosynthesis; L-lysine biosynthesis via DAP pathway; LL-2,6-diaminopimelate from (S)-tetrahydrodipicolinate (succinylase route): step 3/3. Functionally, catalyzes the hydrolysis of N-succinyl-L,L-diaminopimelic acid (SDAP), forming succinate and LL-2,6-diaminopimelate (DAP), an intermediate involved in the bacterial biosynthesis of lysine and meso-diaminopimelic acid, an essential component of bacterial cell walls. This Pseudomonas putida (strain GB-1) protein is Succinyl-diaminopimelate desuccinylase.